Here is a 162-residue protein sequence, read N- to C-terminus: Meiosis-specific protein HED1 (162 aa).

A disordered region spans residues 67–124 (KNLSENTGGGSPNGGAYLDAKKGVREQDQYQGGPSKELDRLQPPPSMKKSPPRKKKSL). Over residues 85-94 (DAKKGVREQD) the composition is skewed to basic and acidic residues.

In terms of assembly, interacts with RAD51.

The protein localises to the nucleus. It is found in the chromosome. Involved in regulation of meiotic recombination and repair of DNA damage. Inhibits RAD51-mediated recombination when the meiotic recombination machinery is impaired. The sequence is that of Meiosis-specific protein HED1 (HED1) from Saccharomyces cerevisiae (strain ATCC 204508 / S288c) (Baker's yeast).